Reading from the N-terminus, the 250-residue chain is Probable aquaporin TIP2-2 (250 aa).

An N-acetylmethionine modification is found at Met1. Residues 1–24 (MVKIEIGSVGDSFSVASLKAYLSE) are Cytoplasmic-facing. Residue Lys3 is modified to N6,N6-dimethyllysine. A helical transmembrane segment spans residues 25 to 45 (FIATLLFVFAGVGSALAFAKL). Residues 46 to 53 (TSDAALDP) lie on the Vacuolar side of the membrane. Residues 54–74 (AGLVAVAVAHAFALFVGVSIA) form a helical membrane-spanning segment. The Cytoplasmic portion of the chain corresponds to 75-101 (ANISGGHLNPAVTLGLAVGGNITVITG). Residues 83–85 (NPA) carry the NPA 1 motif. The chain crosses the membrane as a helical span at residues 102–122 (FFYWIAQCLGSIVACLLLVFV). Topologically, residues 123 to 133 (TNGESVPTHGV) are vacuolar. A helical transmembrane segment spans residues 134–154 (AAGLGAIEGVVMEIVVTFALV). The Cytoplasmic portion of the chain corresponds to 155–168 (YTVYATAADPKKGS). Residues 169 to 189 (LGTIAPIAIGFIVGANILAAG) traverse the membrane as a helical segment. Over 190 to 210 (PFSGGSMNPARSFGPAVVSGD) the chain is Vacuolar. An NPA 2 motif is present at residues 197–199 (NPA). A helical membrane pass occupies residues 211-231 (FSQIWIYWVGPLVGGALAGLI). The Cytoplasmic segment spans residues 232 to 250 (YGDVFIGSYAPAPTTESYP). Ser248 bears the Phosphoserine mark.

The protein belongs to the MIP/aquaporin (TC 1.A.8) family. TIP (TC 1.A.8.10) subfamily. Interacts with cucumber mosaic virus (CMV) Protein 1a. Expressed above groung and in roots.

It is found in the vacuole membrane. Functionally, aquaporins facilitate the transport of water and small neutral solutes across cell membranes. The protein is Probable aquaporin TIP2-2 (TIP2-2) of Arabidopsis thaliana (Mouse-ear cress).